The following is a 218-amino-acid chain: N-(5'-phosphoribosyl)anthranilate isomerase (218 aa).

This sequence belongs to the TrpF family.

It carries out the reaction N-(5-phospho-beta-D-ribosyl)anthranilate = 1-(2-carboxyphenylamino)-1-deoxy-D-ribulose 5-phosphate. Its pathway is amino-acid biosynthesis; L-tryptophan biosynthesis; L-tryptophan from chorismate: step 3/5. This chain is N-(5'-phosphoribosyl)anthranilate isomerase, found in Stenotrophomonas maltophilia (strain R551-3).